A 381-amino-acid polypeptide reads, in one-letter code: Glycerophosphocholine acyltransferase 1 (381 aa).

Residues 1-63 (MANNEDSNSN…IAKQAEEHER (63 aa)) lie on the Cytoplasmic side of the membrane. Residues 64 to 84 (FINKVTHLVGVLGFGGFCFLL) form a helical membrane-spanning segment. At 85-89 (GARPQ) the chain is on the lumenal side. Residues 90-110 (DIPLVYCFFYVIFVPLRWIYY) form a helical membrane-spanning segment. Residues 111–116 (RFKKWH) are Cytoplasmic-facing. Residues 117–137 (YYLLDFCYYANTIFLVDLLLY) traverse the membrane as a helical segment. Residues 138–141 (PKNE) are Lumenal-facing. Residues 142–162 (KLFMVCFSFAEGPLAWAIIVW) traverse the membrane as a helical segment. The Cytoplasmic segment spans residues 163–173 (RCSLVFSSPDK). A helical membrane pass occupies residues 174–194 (IVSVLIHLLPGLVFFTIRWWN). Residues 195–223 (PATFAAMHPVGTDRRVSWPYVEDKAYLFT) lie on the Lumenal side of the membrane. The helical transmembrane segment at 224-244 (WLFLVPLVVYTLWQVLYFLIV) threads the bilayer. Residues 245–291 (NVLRRQRLLRDPEVMTSYRELSKKAEKANNKLWQLSGLLGDQNRIWM) are Cytoplasmic-facing. A helical membrane pass occupies residues 292 to 312 (YILFQAIFTVATMALTVPIFL). Over 313–315 (SYR) the chain is Lumenal. Residues 316–336 (LHVIFQILKISAAVWNGGSFL) traverse the membrane as a helical segment. The Cytoplasmic segment spans residues 337-381 (LEVMPRQVIQKEKKKKAEMQPIEEQILHHEAVSHPTENEPKSTET).

Belongs to the GPC1 family.

The protein localises to the membrane. The enzyme catalyses sn-glycerol 3-phosphocholine + an acyl-CoA = a 1-acyl-sn-glycero-3-phosphocholine + CoA. It carries out the reaction sn-glycero-3-phosphoethanolamine + an acyl-CoA = a monoacyl-sn-glycero-3-phosphoethanolamine + CoA. It catalyses the reaction sn-glycerol 3-phosphocholine + (9Z)-octadecenoyl-CoA = (9Z-octadecenoyl)-sn-glycero-3-phosphocholine + CoA. In terms of biological role, glycerophosphocholine acyltransferase (GPCAT) that utilizes acyl-CoA to acylate glycero-3-phosphocholine (GPC), forming lysophosphatidylcholine (LPC). Shows broad acyl specificities with a preference for 16:0-CoA, polyunsaturated acyl-CoA, and the hydroxylated ricinoleoyl-CoA. Also catalyzes the acylation of glycero-3-phosphoethanolamine (GPE) with acyl-CoA. In addition to acyl-CoA, GPCAT efficiently utilizes LPC and lysophosphatidylethanolamine (LPE) as acyl donors in the acylation of GPC. Contributes to the maintenance of phosphatidylcholine (PC) homeostasis and might also have specific functions in acyl editing of PC, such as transferring acyl groups modified at the sn-2 position of PC to the sn-1. This Arabidopsis thaliana (Mouse-ear cress) protein is Glycerophosphocholine acyltransferase 1.